The primary structure comprises 339 residues: Ketol-acid reductoisomerase (NADP(+)) (339 aa).

Residues Met-1 to Thr-182 enclose the KARI N-terminal Rossmann domain. Residues Tyr-24–Gln-27, Arg-48, Ser-51, Ser-53, and Asp-83–Gln-86 contribute to the NADP(+) site. His-108 is an active-site residue. Gly-134 contacts NADP(+). Positions Thr-183–Ile-328 constitute a KARI C-terminal knotted domain. Positions 191, 195, 227, and 231 each coordinate Mg(2+). A substrate-binding site is contributed by Ser-252.

The protein belongs to the ketol-acid reductoisomerase family. The cofactor is Mg(2+).

The catalysed reaction is (2R)-2,3-dihydroxy-3-methylbutanoate + NADP(+) = (2S)-2-acetolactate + NADPH + H(+). The enzyme catalyses (2R,3R)-2,3-dihydroxy-3-methylpentanoate + NADP(+) = (S)-2-ethyl-2-hydroxy-3-oxobutanoate + NADPH + H(+). It functions in the pathway amino-acid biosynthesis; L-isoleucine biosynthesis; L-isoleucine from 2-oxobutanoate: step 2/4. It participates in amino-acid biosynthesis; L-valine biosynthesis; L-valine from pyruvate: step 2/4. Functionally, involved in the biosynthesis of branched-chain amino acids (BCAA). Catalyzes an alkyl-migration followed by a ketol-acid reduction of (S)-2-acetolactate (S2AL) to yield (R)-2,3-dihydroxy-isovalerate. In the isomerase reaction, S2AL is rearranged via a Mg-dependent methyl migration to produce 3-hydroxy-3-methyl-2-ketobutyrate (HMKB). In the reductase reaction, this 2-ketoacid undergoes a metal-dependent reduction by NADPH to yield (R)-2,3-dihydroxy-isovalerate. This chain is Ketol-acid reductoisomerase (NADP(+)), found in Nitrobacter hamburgensis (strain DSM 10229 / NCIMB 13809 / X14).